We begin with the raw amino-acid sequence, 66 residues long: Toxin BeM14 (66 aa).

The region spanning 2–66 (RDAYIADDRN…IRKIPGEECR (65 aa)) is the LCN-type CS-alpha/beta domain. 4 cysteine pairs are disulfide-bonded: Cys12–Cys65, Cys16–Cys36, Cys22–Cys46, and Cys26–Cys48.

This sequence belongs to the long (4 C-C) scorpion toxin superfamily. Sodium channel inhibitor family. Alpha subfamily. In terms of tissue distribution, expressed by the venom gland.

It is found in the secreted. Its function is as follows. Alpha toxins bind voltage-independently at site-3 of sodium channels (Nav) and inhibit the inactivation of the activated channels, thereby blocking neuronal transmission. Has paralytic activity in mice. The protein is Toxin BeM14 of Mesobuthus eupeus (Lesser Asian scorpion).